The sequence spans 317 residues: Apolipoprotein E (317 aa).

Residues 1–18 form the signal peptide; it reads MRVLWVALVVTLLAGCRT. A run of 8 repeats spans residues 79-100, 101-122, 123-144, 145-166, 167-188, 189-210, 211-232, and 233-254. The tract at residues 79-254 is 8 X 22 AA approximate tandem repeats; the sequence is ELIEESMKEV…RLDEMRDELE (176 aa). M142 carries the post-translational modification Methionine sulfoxide. The tract at residues 157 to 167 is LDL and other lipoprotein receptors binding; the sequence is HLRNVRKRLVR. Residue 161 to 164 coordinates heparin; that stretch reads VRKR. A lipid-binding and lipoprotein association region spans residues 209–289; it reads AATLSTRAGQ…GWFEPLVEDM (81 aa). Residue 228-235 participates in heparin binding; sequence GQKLRGRL. The segment at 265–317 is homooligomerization; that stretch reads SQLRLQAEAFQARLKGWFEPLVEDMRRQWAGLVERMQSAVSISSSTSAPSDNQ. Residues 277–289 are specificity for association with VLDL; it reads RLKGWFEPLVEDM.

It belongs to the apolipoprotein A1/A4/E family. In terms of assembly, homotetramer. May interact with ABCA1; functionally associated with ABCA1 in the biogenesis of HDLs. May interact with APP/A4 amyloid-beta peptide; the interaction is extremely stable in vitro but its physiological significance is unclear. May interact with MAPT. May interact with MAP2. In the cerebrospinal fluid, interacts with secreted SORL1. Interacts with PMEL; this allows the loading of PMEL luminal fragment on ILVs to induce fibril nucleation. In terms of processing, APOE exists as multiple glycosylated and sialylated glycoforms within cells and in plasma. The extent of glycosylation and sialylation are tissue and context specific. Post-translationally, glycated in plasma VLDL. Phosphorylated by FAM20C in the extracellular medium.

Its subcellular location is the secreted. The protein resides in the extracellular space. The protein localises to the extracellular matrix. It localises to the extracellular vesicle. It is found in the endosome. Its subcellular location is the multivesicular body. APOE is an apolipoprotein, a protein associating with lipid particles, that mainly functions in lipoprotein-mediated lipid transport between organs via the plasma and interstitial fluids. APOE is a core component of plasma lipoproteins and is involved in their production, conversion and clearance. Apolipoproteins are amphipathic molecules that interact both with lipids of the lipoprotein particle core and the aqueous environment of the plasma. As such, APOE associates with chylomicrons, chylomicron remnants, very low density lipoproteins (VLDL) and intermediate density lipoproteins (IDL) but shows a preferential binding to high-density lipoproteins (HDL). It also binds a wide range of cellular receptors including the LDL receptor/LDLR and the very low-density lipoprotein receptor/VLDLR that mediate the cellular uptake of the APOE-containing lipoprotein particles. Finally, APOE also has a heparin-binding activity and binds heparan-sulfate proteoglycans on the surface of cells, a property that supports the capture and the receptor-mediated uptake of APOE-containing lipoproteins by cells. This is Apolipoprotein E (APOE) from Sus scrofa (Pig).